Reading from the N-terminus, the 286-residue chain is Beta-lactamase TEM-12 (286 aa).

An N-terminal signal peptide occupies residues 1–23 (MSIQHFRVALIPFFAAFCLPVFA). The active-site Acyl-ester intermediate is the Ser-68. A disulfide bridge connects residues Cys-75 and Cys-121. Glu-166 acts as the Proton acceptor in catalysis. 232 to 234 (KSG) is a substrate binding site.

This sequence belongs to the class-A beta-lactamase family.

The catalysed reaction is a beta-lactam + H2O = a substituted beta-amino acid. Functionally, TEM-type are the most prevalent beta-lactamases in enterobacteria; they hydrolyze the beta-lactam bond in susceptible beta-lactam antibiotics, thus conferring resistance to penicillins and cephalosporins such as ceftazidime. The chain is Beta-lactamase TEM-12 (blaT-12b) from Klebsiella oxytoca.